The chain runs to 152 residues: Large ribosomal subunit protein bL9 (152 aa).

This sequence belongs to the bacterial ribosomal protein bL9 family.

Functionally, binds to the 23S rRNA. The sequence is that of Large ribosomal subunit protein bL9 from Pelagibacter ubique (strain HTCC1062).